A 195-amino-acid polypeptide reads, in one-letter code: Imidazoleglycerol-phosphate dehydratase (195 aa).

It belongs to the imidazoleglycerol-phosphate dehydratase family.

The protein localises to the cytoplasm. It catalyses the reaction D-erythro-1-(imidazol-4-yl)glycerol 3-phosphate = 3-(imidazol-4-yl)-2-oxopropyl phosphate + H2O. It functions in the pathway amino-acid biosynthesis; L-histidine biosynthesis; L-histidine from 5-phospho-alpha-D-ribose 1-diphosphate: step 6/9. The sequence is that of Imidazoleglycerol-phosphate dehydratase from Ruegeria pomeroyi (strain ATCC 700808 / DSM 15171 / DSS-3) (Silicibacter pomeroyi).